We begin with the raw amino-acid sequence, 133 residues long: Small ribosomal subunit protein uS11 (133 aa).

The interval 1-23 (MPPKTRGAVRKPRKKDKKNIALG) is disordered. Positions 7 to 17 (GAVRKPRKKDK) are enriched in basic residues.

It belongs to the universal ribosomal protein uS11 family. As to quaternary structure, part of the 30S ribosomal subunit. Interacts with proteins S7 and S18. Binds to IF-3.

Functionally, located on the platform of the 30S subunit, it bridges several disparate RNA helices of the 16S rRNA. Forms part of the Shine-Dalgarno cleft in the 70S ribosome. The sequence is that of Small ribosomal subunit protein uS11 from Pseudarthrobacter chlorophenolicus (strain ATCC 700700 / DSM 12829 / CIP 107037 / JCM 12360 / KCTC 9906 / NCIMB 13794 / A6) (Arthrobacter chlorophenolicus).